Consider the following 60-residue polypeptide: Metallothionein A (60 aa).

The interval 1–28 (MDPCECSKTGKCNCGTSCTCTNCSCKCC) is beta. C4, C6, C12, C14, C18, C20, C23, C25, C28, C32, C33, C35, C36, C40, C43, C47, C49, C54, C58, and C59 together coordinate a divalent metal cation. Positions 29–60 (KKSCCSCCPSGCSKCASGCVCKGNSCDKSCCQ) are alpha.

It belongs to the metallothionein superfamily. Type 1 family.

Metallothioneins have a high content of cysteine residues that bind various heavy metals. This Cyprinodon sp. (Pupfish) protein is Metallothionein A (mta).